Consider the following 713-residue polypeptide: Cyclomaltodextrin glucanotransferase (713 aa).

An N-terminal signal peptide occupies residues 1-27; sequence MKKQVKWLTSVSMSVGIALGAALPVWA. Residues 28–165 form an A1 region; that stretch reads SPDTSVNNKL…NIKVVMDFAP (138 aa). Ca(2+) contacts are provided by Asp-54, Asn-56, Asn-59, Asn-60, Gly-78, and Asp-80. 127-128 is a binding site for substrate; it reads YW. Asn-166 is a Ca(2+) binding site. Residues 166–229 are b; sequence NHTNPASSTD…NLYDLADINQ (64 aa). A substrate-binding site is contributed by His-167. Ca(2+) is bound at residue Ile-217. 220 to 223 is a binding site for substrate; sequence NLYD. Asp-226 contributes to the Ca(2+) binding site. The segment at 230 to 434 is A2; it reads NNNTIDSYLK…LRKSNPALAY (205 aa). Arg-254 contributes to the substrate binding site. Asp-256 (nucleophile) is an active-site residue. 259-260 is a substrate binding site; sequence KH. His-260 contributes to the Ca(2+) binding site. The Proton donor role is filled by Glu-285. His-355, Asp-399, and Arg-403 together coordinate substrate. The c stretch occupies residues 435–522; it reads GSTTQRWVNS…GTAVWQYTTT (88 aa). Residues 523 to 609 are d; the sequence is ESSPIIGNVG…SAAFNNFNVL (87 aa). In terms of domain architecture, IPT/TIG spans 526–606; sequence PIIGNVGPTM…GTTSAAFNNF (81 aa). Residues 608–713 form the CBM20 domain; that stretch reads VLTADQVTVR…VATVTVDWQN (106 aa). The e stretch occupies residues 610–713; sequence TADQVTVRFK…VATVTVDWQN (104 aa).

The protein belongs to the glycosyl hydrolase 13 family. Monomer. Ca(2+) serves as cofactor.

It is found in the secreted. The catalysed reaction is Cyclizes part of a (1-&gt;4)-alpha-D-glucan chain by formation of a (1-&gt;4)-alpha-D-glucosidic bond.. The polypeptide is Cyclomaltodextrin glucanotransferase (Paenibacillus macerans (Bacillus macerans)).